Reading from the N-terminus, the 323-residue chain is Coiled-coil domain-containing protein 160 (323 aa).

The stretch at 143–290 (SKLRLNLLNE…IKNELRTEKS (148 aa)) forms a coiled coil.

It belongs to the CCDC160 family.

The polypeptide is Coiled-coil domain-containing protein 160 (CCDC160) (Bos taurus (Bovine)).